A 449-amino-acid polypeptide reads, in one-letter code: Glucose-6-phosphate isomerase (449 aa).

Glutamate 291 acts as the Proton donor in catalysis. Residues histidine 312 and lysine 426 contribute to the active site.

It belongs to the GPI family.

It localises to the cytoplasm. The enzyme catalyses alpha-D-glucose 6-phosphate = beta-D-fructose 6-phosphate. The protein operates within carbohydrate biosynthesis; gluconeogenesis. It functions in the pathway carbohydrate degradation; glycolysis; D-glyceraldehyde 3-phosphate and glycerone phosphate from D-glucose: step 2/4. In terms of biological role, catalyzes the reversible isomerization of glucose-6-phosphate to fructose-6-phosphate. The sequence is that of Glucose-6-phosphate isomerase from Clostridium botulinum (strain Eklund 17B / Type B).